A 233-amino-acid chain; its full sequence is uncharacterized protein (233 aa).

A run of 6 helical transmembrane segments spans residues 7 to 27, 36 to 56, 62 to 82, 119 to 139, 159 to 179, and 188 to 208; these read VPIFIAILSFIVMCIGELLAY, YEFEAISFGFIFGVATLILIP, MFVLYVILGMITVYLIEKYLA, LIIAVSYISEIGLPLYLAILM, PLYPGVFVSFGTVLGTIVGLV, and ILLAFSGGVFLGAFLMLAPHI.

Its subcellular location is the cell membrane. This is an uncharacterized protein from Methanocaldococcus jannaschii (strain ATCC 43067 / DSM 2661 / JAL-1 / JCM 10045 / NBRC 100440) (Methanococcus jannaschii).